The chain runs to 389 residues: Succinate--CoA ligase [ADP-forming] subunit beta (389 aa).

One can recognise an ATP-grasp domain in the interval 9-244 (KQLLAEYGIP…KTQEDPTEVI (236 aa)). ATP-binding positions include K46, 53 to 55 (GRG), G102, and E107. Mg(2+)-binding residues include N199 and D213. Substrate-binding positions include N264 and 321–323 (GIV).

This sequence belongs to the succinate/malate CoA ligase beta subunit family. Heterotetramer of two alpha and two beta subunits. Mg(2+) serves as cofactor.

It catalyses the reaction succinate + ATP + CoA = succinyl-CoA + ADP + phosphate. The enzyme catalyses GTP + succinate + CoA = succinyl-CoA + GDP + phosphate. Its pathway is carbohydrate metabolism; tricarboxylic acid cycle; succinate from succinyl-CoA (ligase route): step 1/1. In terms of biological role, succinyl-CoA synthetase functions in the citric acid cycle (TCA), coupling the hydrolysis of succinyl-CoA to the synthesis of either ATP or GTP and thus represents the only step of substrate-level phosphorylation in the TCA. The beta subunit provides nucleotide specificity of the enzyme and binds the substrate succinate, while the binding sites for coenzyme A and phosphate are found in the alpha subunit. This chain is Succinate--CoA ligase [ADP-forming] subunit beta, found in Stenotrophomonas maltophilia (strain R551-3).